Here is a 306-residue protein sequence, read N- to C-terminus: N-acetylmuramic acid 6-phosphate etherase (306 aa).

The 164-residue stretch at 60-223 folds into the SIS domain; sequence TAAALRGGGR…STGAMVRLGK (164 aa). Glu-88 (proton donor) is an active-site residue. Residue Glu-119 is part of the active site.

Belongs to the GCKR-like family. MurNAc-6-P etherase subfamily. In terms of assembly, homodimer.

It carries out the reaction N-acetyl-D-muramate 6-phosphate + H2O = N-acetyl-D-glucosamine 6-phosphate + (R)-lactate. It participates in amino-sugar metabolism; N-acetylmuramate degradation. In terms of biological role, specifically catalyzes the cleavage of the D-lactyl ether substituent of MurNAc 6-phosphate, producing GlcNAc 6-phosphate and D-lactate. The polypeptide is N-acetylmuramic acid 6-phosphate etherase (Gloeobacter violaceus (strain ATCC 29082 / PCC 7421)).